The following is a 365-amino-acid chain: Putative chalcone synthase (365 aa).

The active site involves C144.

It belongs to the thiolase-like superfamily. Chalcone/stilbene synthases family.

It catalyses the reaction (E)-4-coumaroyl-CoA + 3 malonyl-CoA + 3 H(+) = 2',4,4',6'-tetrahydroxychalcone + 3 CO2 + 4 CoA. The polypeptide is Putative chalcone synthase (bcsA) (Bacillus subtilis (strain 168)).